The chain runs to 588 residues: uncharacterized protein (588 aa).

The first 19 residues, 1–19 (MRSTAYLTALLSFLGATHA), serve as a signal peptide directing secretion. Residues N45 and N104 are each glycosylated (N-linked (GlcNAc...) asparagine). Residues 118-303 (GQGRIPLYSA…TSVTLRTFKD (186 aa)) form the FAD-binding PCMH-type domain. The residue at position 156 (H156) is a Pros-8alpha-FAD histidine. N-linked (GlcNAc...) asparagine glycosylation is found at N179, N312, N320, N351, N370, and N446.

The protein belongs to the oxygen-dependent FAD-linked oxidoreductase family. FAD serves as cofactor.

It is found in the secreted. This is an uncharacterized protein from Arthroderma benhamiae (strain ATCC MYA-4681 / CBS 112371) (Trichophyton mentagrophytes).